We begin with the raw amino-acid sequence, 277 residues long: Digeranylgeranylglyceryl phosphate synthase (277 aa).

8 consecutive transmembrane segments (helical) span residues 16-36, 40-60, 83-105, 107-124, 146-166, 202-222, 224-244, and 256-276; these read LLAG…LPEL, ILVF…NDYF, AALW…INIW, FLLA…AWKL, GAIA…AFLV, VGAL…KAGI, LGYL…FLIL, and QILL…ASLV.

It belongs to the UbiA prenyltransferase family. DGGGP synthase subfamily. It depends on Mg(2+) as a cofactor.

The protein localises to the cell membrane. The enzyme catalyses sn-3-O-(geranylgeranyl)glycerol 1-phosphate + (2E,6E,10E)-geranylgeranyl diphosphate = 2,3-bis-O-(geranylgeranyl)-sn-glycerol 1-phosphate + diphosphate. Its pathway is membrane lipid metabolism; glycerophospholipid metabolism. Functionally, prenyltransferase that catalyzes the transfer of the geranylgeranyl moiety of geranylgeranyl diphosphate (GGPP) to the C2 hydroxyl of (S)-3-O-geranylgeranylglyceryl phosphate (GGGP). This reaction is the second ether-bond-formation step in the biosynthesis of archaeal membrane lipids. The protein is Digeranylgeranylglyceryl phosphate synthase of Thermococcus kodakarensis (strain ATCC BAA-918 / JCM 12380 / KOD1) (Pyrococcus kodakaraensis (strain KOD1)).